Consider the following 427-residue polypeptide: Transcobalamin-2 (427 aa).

Positions 1–18 (MELLKALLLLSGVLGALA) are cleaved as a signal peptide. 3 cysteine pairs are disulfide-bonded: Cys-21–Cys-268, Cys-116–Cys-310, and Cys-165–Cys-208. Cob(II)alamin is bound by residues 152–156 (TSYYQ), His-193, 193–197 (HLSVD), Asn-245, Ser-248, Gln-292, and 395–397 (WQL).

This sequence belongs to the eukaryotic cobalamin transport proteins family. As to quaternary structure, interacts with CD320 (via LDL-receptor class A domains).

It localises to the secreted. Primary vitamin B12-binding and transport protein. Delivers cobalamin to cells. The protein is Transcobalamin-2 (Tcn2) of Rattus norvegicus (Rat).